Consider the following 198-residue polypeptide: MRFDGAQAGWRETPRPGCTLDQRDWLTRGGSLTAHLARLGRVNVRVTREAVDRPWFDEPDALASSPRAPMWVREVILSVDGMPYVAAHSIAPLAASKGVWQAMRRLRTRPLAELLYSDPQVERSALVSRRVIAGHPLYALASHALLGARAPHAFVARRSVFQRHGKPLMVTECMLPALWRHLDAHGDGPRSVGSHGGA.

Positions 73, 111, and 172 each coordinate substrate.

The protein belongs to the UbiC family.

It localises to the cytoplasm. The catalysed reaction is chorismate = 4-hydroxybenzoate + pyruvate. It functions in the pathway cofactor biosynthesis; ubiquinone biosynthesis. Functionally, removes the pyruvyl group from chorismate, with concomitant aromatization of the ring, to provide 4-hydroxybenzoate (4HB) for the ubiquinone pathway. This is Probable chorismate pyruvate-lyase from Burkholderia orbicola (strain AU 1054).